The following is a 453-amino-acid chain: tRNA modification GTPase MnmE (453 aa).

(6S)-5-formyl-5,6,7,8-tetrahydrofolate contacts are provided by arginine 22, glutamate 79, and lysine 119. Positions 215–376 constitute a TrmE-type G domain; sequence GMKVVIAGRP…LREHLKACMG (162 aa). Asparagine 225 serves as a coordination point for K(+). Residues 225-230, 244-250, 269-272, and 334-337 contribute to the GTP site; these read NAGKSS, TEIAGTT, DTAG, and NKAD. Serine 229 lines the Mg(2+) pocket. Positions 244, 246, and 249 each coordinate K(+). Threonine 250 is a binding site for Mg(2+). Lysine 453 provides a ligand contact to (6S)-5-formyl-5,6,7,8-tetrahydrofolate.

It belongs to the TRAFAC class TrmE-Era-EngA-EngB-Septin-like GTPase superfamily. TrmE GTPase family. In terms of assembly, homodimer. Heterotetramer of two MnmE and two MnmG subunits. K(+) serves as cofactor.

Its subcellular location is the cytoplasm. In terms of biological role, exhibits a very high intrinsic GTPase hydrolysis rate. Involved in the addition of a carboxymethylaminomethyl (cmnm) group at the wobble position (U34) of certain tRNAs, forming tRNA-cmnm(5)s(2)U34. The chain is tRNA modification GTPase MnmE from Aeromonas salmonicida (strain A449).